A 309-amino-acid chain; its full sequence is Caspase-7 (309 aa).

Positions 1–24 (MSGDQHADRSSGEKSNGDQDDTVD) are cleaved as a propeptide — N-terminally processed. The segment covering 1–31 (MSGDQHADRSSGEKSNGDQDDTVDAKPDRSS) has biased composition (basic and acidic residues). The disordered stretch occupies residues 1-53 (MSGDQHADRSSGEKSNGDQDDTVDAKPDRSSRLSLFAKKKKNGEEEQPKSSLS). Residues 39-42 (KKKN) are exosite. Residues 81–92 (KNFEDKTGMGTR) form a loop L1 region. Residues histidine 149 and cysteine 191 contribute to the active site. Residues 192–201 (RGSEFDEGIQ) are loop L2. A propeptide spanning residues 204–214 (SGPANDTLETD) is cleaved from the precursor. The interval 234–246 (VPGYYSWRNPGRG) is loop L3. The segment at 282–296 (ESQSDDPRFSEKKQI) is loop L4.

The protein belongs to the peptidase C14A family. Heterotetramer that consists of two anti-parallel arranged heterodimers, each one formed by a 20 kDa (p20) and a 11 kDa (p11) subunit. Post-translationally, cleavage by different proteases, such as granzyme B (GZMB), caspase-1 (CASP1), caspase-8 (CASP8) or caspase-9 (CASP9) generate the two active subunits. Its involvement in different programmed cell death processes is probably specified by the protease that activates CASP7. Cleaved and activated by initiator caspases (CASP8 and/or CASP9), leading to execution phase of apoptosis. Cleavage and maturation by GZMB regulates granzyme-mediated programmed cell death. Cleaved and activated by CASP1 in response to bacterial infection.

It localises to the cytoplasm. The protein resides in the cytosol. The protein localises to the nucleus. It is found in the secreted. Its subcellular location is the extracellular space. It catalyses the reaction Strict requirement for an Asp residue at position P1 and has a preferred cleavage sequence of Asp-Glu-Val-Asp-|-.. With respect to regulation, during activation, the N-terminal disordered prodomain is removed by cleavage. Concomitantly, double cleavage gives rise to a large Caspase-7 subunit p20 and a small Caspase-7 subunit p11. The two large and two small subunits then assemble to form the active CASP7 complex. Can be cleaved and activated by different caspases, depending on the context. Cleaved and activated by initiator caspases (CASP8 and/or CASP9), leading to execution phase of apoptosis. Cleavage and maturation by GZMB regulates granzyme-mediated programmed cell death. Cleavage and maturation by CASP1 regulates pyroptosis. Inhibited by BIRC6; following inhibition of BIRC6-caspase binding by DIABLO/SMAC, BIRC6 is subjected to caspase cleavage, leading to an increase in active caspases. In terms of biological role, thiol protease involved in different programmed cell death processes, such as apoptosis, pyroptosis or granzyme-mediated programmed cell death, by proteolytically cleaving target proteins. Has a marked preference for Asp-Glu-Val-Asp (DEVD) consensus sequences, with some plasticity for alternate non-canonical sequences. Its involvement in the different programmed cell death processes is probably determined by upstream proteases that activate CASP7. Acts as an effector caspase involved in the execution phase of apoptosis: following cleavage and activation by initiator caspases (CASP8 and/or CASP9), mediates execution of apoptosis by catalyzing cleavage of proteins. Compared to CASP3, acts as a minor executioner caspase and cleaves a limited set of target proteins. Acts as a key regulator of the inflammatory response in response to bacterial infection by catalyzing cleavage and activation of the sphingomyelin phosphodiesterase SMPD1 in the extracellular milieu, thereby promoting membrane repair. Cleaves BIRC6 following inhibition of BIRC6-caspase binding by DIABLO/SMAC. This Gallus gallus (Chicken) protein is Caspase-7.